We begin with the raw amino-acid sequence, 226 residues long: Peptidyl-prolyl cis-trans isomerase CYP23 (226 aa).

The first 22 residues, 1–22 (MGITRNLILGLACLAFVSIAKA), serve as a signal peptide directing secretion. One can recognise a PPIase cyclophilin-type domain in the interval 34–191 (VVFQTSYGDI…ERITILSTYY (158 aa)).

It belongs to the cyclophilin-type PPIase family. In terms of tissue distribution, ubiquitous. Lower expression in roots.

It is found in the endoplasmic reticulum. It carries out the reaction [protein]-peptidylproline (omega=180) = [protein]-peptidylproline (omega=0). Its function is as follows. PPIases accelerate the folding of proteins. It catalyzes the cis-trans isomerization of proline imidic peptide bonds in oligopeptides. This chain is Peptidyl-prolyl cis-trans isomerase CYP23 (CYP23), found in Arabidopsis thaliana (Mouse-ear cress).